The sequence spans 367 residues: Anhydro-N-acetylmuramic acid kinase (367 aa).

G13–D20 is a binding site for ATP.

This sequence belongs to the anhydro-N-acetylmuramic acid kinase family.

It catalyses the reaction 1,6-anhydro-N-acetyl-beta-muramate + ATP + H2O = N-acetyl-D-muramate 6-phosphate + ADP + H(+). It functions in the pathway amino-sugar metabolism; 1,6-anhydro-N-acetylmuramate degradation. Its pathway is cell wall biogenesis; peptidoglycan recycling. Its function is as follows. Catalyzes the specific phosphorylation of 1,6-anhydro-N-acetylmuramic acid (anhMurNAc) with the simultaneous cleavage of the 1,6-anhydro ring, generating MurNAc-6-P. Is required for the utilization of anhMurNAc either imported from the medium or derived from its own cell wall murein, and thus plays a role in cell wall recycling. This is Anhydro-N-acetylmuramic acid kinase from Neisseria meningitidis serogroup B (strain ATCC BAA-335 / MC58).